A 574-amino-acid polypeptide reads, in one-letter code: Golgin subfamily A member 6-like protein 4 (574 aa).

The segment covering 1–11 (MWPQPRFPPHP) has biased composition (pro residues). 2 disordered regions span residues 1–77 (MWPQ…YGEG) and 491–552 (KELK…AAGG). Residues 51 to 62 (NGSSPDTATSGG) are compositionally biased toward polar residues. Positions 157–496 (SKVEQLQDET…EQQVKELKKS (340 aa)) form a coiled coil. Positions 491–504 (KELKKSGGAEEPRG) are enriched in basic and acidic residues. A compositionally biased stretch (low complexity) spans 508–523 (AAAARPVAGAPVPQGA).

This sequence belongs to the GOLGA6 family.

In Homo sapiens (Human), this protein is Golgin subfamily A member 6-like protein 4 (GOLGA6L4).